Reading from the N-terminus, the 293-residue chain is Ribosomal protein L11 methyltransferase (293 aa).

Residues Thr145, Gly166, Asp188, and Asn230 each coordinate S-adenosyl-L-methionine.

It belongs to the methyltransferase superfamily. PrmA family.

It localises to the cytoplasm. It carries out the reaction L-lysyl-[protein] + 3 S-adenosyl-L-methionine = N(6),N(6),N(6)-trimethyl-L-lysyl-[protein] + 3 S-adenosyl-L-homocysteine + 3 H(+). In terms of biological role, methylates ribosomal protein L11. This Shewanella putrefaciens (strain CN-32 / ATCC BAA-453) protein is Ribosomal protein L11 methyltransferase.